Here is a 490-residue protein sequence, read N- to C-terminus: One cut domain family member 3 (490 aa).

3 disordered regions span residues 130 to 155 (GAHGGHPHAHPHPATAPPPPPPQRLA), 193 to 213 (LSPLPSALPPALHSAPQPPPP), and 287 to 316 (HGPHSGGGGPGGGGGAGGGSGGPGAGAAAE). Residues 143–152 (ATAPPPPPPQ) show a composition bias toward pro residues. Positions 290-311 (HSGGGGPGGGGGAGGGSGGPGA) are enriched in gly residues. Positions 309–395 (PGAGAAAEEI…QRMSALRLAA (87 aa)) form a DNA-binding region, CUT. A DNA-binding region (homeobox) is located at residues 411 to 470 (PKKQRLVFTDLQRRTLIAIFKENKRPSKEMQATISQQLGLELNTVSNFFMNARRRCMNRW).

The protein belongs to the CUT homeobox family. In terms of tissue distribution, specifically expressed in brain, stomach and gut. Within the gut, expressed only in duodenum and jejunum.

The protein resides in the nucleus. In terms of biological role, transcriptional activator. Binds the consensus DNA sequence 5'-DHWATTGAYTWWD-3' on a variety of gene promoters such as those of HNF3B and TTR. The chain is One cut domain family member 3 (Onecut3) from Mus musculus (Mouse).